Consider the following 317-residue polypeptide: Putative pyridoxal kinase BUD17 (317 aa).

2 residues coordinate substrate: serine 16 and tyrosine 128. ATP is bound by residues 190-191 (TS) and 220-232 (EIPK…SGSG). Aspartate 233 serves as a coordination point for substrate.

It belongs to the pyridoxine kinase family. A divalent metal cation serves as cofactor.

It localises to the cytoplasm. The protein resides in the nucleus. The enzyme catalyses pyridoxal + ATP = pyridoxal 5'-phosphate + ADP + H(+). Its function is as follows. Required for synthesis of pyridoxal-5-phosphate from vitamin B6. Important for bud site selection. This chain is Putative pyridoxal kinase BUD17 (BUD17), found in Saccharomyces cerevisiae (strain ATCC 204508 / S288c) (Baker's yeast).